A 217-amino-acid polypeptide reads, in one-letter code: Adenylate kinase (217 aa).

10-15 (GAGKGT) is an ATP binding site. The NMP stretch occupies residues 30–59 (STGDMFREAIKRGTPLGRQAEVYIKGGRLV). Residues Thr31, Arg36, 57–59 (RLV), 85–88 (GFPR), and Gln92 contribute to the AMP site. The interval 126–163 (GRRVCRQCGATYHVRYNPPAVPGKCDACGQDLVQRADD) is LID. Arg127 contributes to the ATP binding site. Cys130 and Cys133 together coordinate Zn(2+). ATP is bound at residue 136-137 (TY). Residues Cys150 and Cys153 each contribute to the Zn(2+) site. AMP is bound by residues Arg160 and Arg171. Gln199 contributes to the ATP binding site.

Belongs to the adenylate kinase family. Monomer.

The protein resides in the cytoplasm. It carries out the reaction AMP + ATP = 2 ADP. It participates in purine metabolism; AMP biosynthesis via salvage pathway; AMP from ADP: step 1/1. Functionally, catalyzes the reversible transfer of the terminal phosphate group between ATP and AMP. Plays an important role in cellular energy homeostasis and in adenine nucleotide metabolism. This is Adenylate kinase from Moorella thermoacetica (strain ATCC 39073 / JCM 9320).